A 59-amino-acid chain; its full sequence is Small ribosomal subunit protein eS30 (59 aa).

A disordered region spans residues 1–35 (KVHGSLARAGKVRGQTPKVAKQEKKKKKTGRAKRR). The span at 23 to 35 (EKKKKKTGRAKRR) shows a compositional bias: basic residues. Lysine 51 bears the N6-succinyllysine mark.

The protein belongs to the eukaryotic ribosomal protein eS30 family.

In Mus spicilegus (Steppe mouse), this protein is Small ribosomal subunit protein eS30 (Fau).